A 55-amino-acid polypeptide reads, in one-letter code: Large ribosomal subunit protein bL33 (55 aa).

Positions 1–10 are enriched in basic and acidic residues; it reads MAKGGREKIK. The disordered stretch occupies residues 1-27; it reads MAKGGREKIKLQSTAGTGHFYTTDKNK.

The protein belongs to the bacterial ribosomal protein bL33 family.

This Polaromonas naphthalenivorans (strain CJ2) protein is Large ribosomal subunit protein bL33.